The primary structure comprises 337 residues: 4-hydroxyproline 2-epimerase 2 (337 aa).

Cys-90 acts as the Proton acceptor in catalysis. Residues 91–92 (GH), His-223, and Asp-249 each bind substrate. Cys-253 acts as the Proton donor in catalysis. 254 to 255 (GT) lines the substrate pocket.

Belongs to the proline racemase family.

It carries out the reaction trans-4-hydroxy-L-proline = cis-4-hydroxy-D-proline. Catalyzes the epimerization of trans-4-hydroxy-L-proline (t4LHyp) to cis-4-hydroxy-D-proline (c4DHyp). Is likely involved in a degradation pathway that converts t4LHyp to alpha-ketoglutarate. Can also catalyze the epimerization of trans-3-hydroxy-L-proline (t3LHyp) to cis-3-hydroxy-D-proline (c3DHyp), albeit with 170-fold lower efficiency. Displays no proline racemase activity. This Brucella anthropi (strain ATCC 49188 / DSM 6882 / CCUG 24695 / JCM 21032 / LMG 3331 / NBRC 15819 / NCTC 12168 / Alc 37) (Ochrobactrum anthropi) protein is 4-hydroxyproline 2-epimerase 2.